A 1032-amino-acid polypeptide reads, in one-letter code: Suppression of tumorigenicity 18 protein (1032 aa).

3 disordered regions span residues 29 to 76, 162 to 213, and 325 to 354; these read RAEE…TNDH, GRDK…LTYN, and RQPK…AKCP. Basic residues predominate over residues 40–51; the sequence is NKRKSLLMKPRH. Basic and acidic residues predominate over residues 52–76; the sequence is YSPDMDCKENPDNRNEDDGLETNDH. 6 CCHHC-type zinc fingers span residues 344–387, 388–431, 700–743, 744–787, 792–835, and 845–888; these read PRPE…PLEI, LAMH…KLAM, RDLK…LKSL, MAAN…GIKM, EEKE…QKEN, and KLNK…IKKV. Residues Cys353, Cys358, His371, Cys377, Cys397, Cys402, His415, Cys421, Cys709, Cys714, His727, Cys733, Cys753, Cys758, His771, Cys777, Cys801, Cys806, His819, Cys825, Cys854, Cys859, His872, and Cys878 each contribute to the Zn(2+) site. Residues 905 to 974 adopt a coiled-coil conformation; sequence IEGDEEIRHL…KELAGLSQAL (70 aa).

The protein belongs to the MYT1 family. Detected in brain.

It localises to the nucleus. Repressor that binds to DNA sequences containing a bipartite element consisting of a direct repeat of the sequence 5'-AAAGTTT-3' separated by 2-9 nucleotides. Represses basal transcription activity from target promoters. The polypeptide is Suppression of tumorigenicity 18 protein (St18) (Rattus norvegicus (Rat)).